Reading from the N-terminus, the 368-residue chain is Flagellar P-ring protein 1 (368 aa).

An N-terminal signal peptide occupies residues 1 to 24; it reads MIFKQIRRLIAAALLAALSLPAAA.

The protein belongs to the FlgI family. The basal body constitutes a major portion of the flagellar organelle and consists of four rings (L,P,S, and M) mounted on a central rod.

It localises to the periplasm. The protein localises to the bacterial flagellum basal body. In terms of biological role, assembles around the rod to form the L-ring and probably protects the motor/basal body from shearing forces during rotation. The chain is Flagellar P-ring protein 1 from Chromobacterium violaceum (strain ATCC 12472 / DSM 30191 / JCM 1249 / CCUG 213 / NBRC 12614 / NCIMB 9131 / NCTC 9757 / MK).